The primary structure comprises 361 residues: tRNA/tmRNA (uracil-C(5))-methyltransferase (361 aa).

Residues Gln-183, Tyr-211, Asn-216, Glu-232, and Asp-294 each coordinate S-adenosyl-L-methionine. Catalysis depends on Cys-319, which acts as the Nucleophile. The active-site Proton acceptor is the Glu-353.

The protein belongs to the class I-like SAM-binding methyltransferase superfamily. RNA M5U methyltransferase family. TrmA subfamily.

It catalyses the reaction uridine(54) in tRNA + S-adenosyl-L-methionine = 5-methyluridine(54) in tRNA + S-adenosyl-L-homocysteine + H(+). The catalysed reaction is uridine(341) in tmRNA + S-adenosyl-L-methionine = 5-methyluridine(341) in tmRNA + S-adenosyl-L-homocysteine + H(+). Dual-specificity methyltransferase that catalyzes the formation of 5-methyluridine at position 54 (m5U54) in all tRNAs, and that of position 341 (m5U341) in tmRNA (transfer-mRNA). The polypeptide is tRNA/tmRNA (uracil-C(5))-methyltransferase (Acinetobacter baylyi (strain ATCC 33305 / BD413 / ADP1)).